A 285-amino-acid polypeptide reads, in one-letter code: Putative pyruvate, phosphate dikinase regulatory protein (285 aa).

165–172 (GVSRTSKT) lines the ADP pocket.

Belongs to the pyruvate, phosphate/water dikinase regulatory protein family. PDRP subfamily.

It catalyses the reaction N(tele)-phospho-L-histidyl/L-threonyl-[pyruvate, phosphate dikinase] + ADP = N(tele)-phospho-L-histidyl/O-phospho-L-threonyl-[pyruvate, phosphate dikinase] + AMP + H(+). It carries out the reaction N(tele)-phospho-L-histidyl/O-phospho-L-threonyl-[pyruvate, phosphate dikinase] + phosphate + H(+) = N(tele)-phospho-L-histidyl/L-threonyl-[pyruvate, phosphate dikinase] + diphosphate. Bifunctional serine/threonine kinase and phosphorylase involved in the regulation of the pyruvate, phosphate dikinase (PPDK) by catalyzing its phosphorylation/dephosphorylation. This chain is Putative pyruvate, phosphate dikinase regulatory protein, found in Lactobacillus delbrueckii subsp. bulgaricus (strain ATCC BAA-365 / Lb-18).